A 177-amino-acid chain; its full sequence is Large ribosomal subunit protein uL6 (177 aa).

This sequence belongs to the universal ribosomal protein uL6 family. Part of the 50S ribosomal subunit.

Functionally, this protein binds to the 23S rRNA, and is important in its secondary structure. It is located near the subunit interface in the base of the L7/L12 stalk, and near the tRNA binding site of the peptidyltransferase center. The polypeptide is Large ribosomal subunit protein uL6 (Agrobacterium fabrum (strain C58 / ATCC 33970) (Agrobacterium tumefaciens (strain C58))).